The primary structure comprises 505 residues: Zinc metalloproteinase/disintegrin (505 aa).

The N-terminal stretch at 1–20 (MIQVLLVIICLAAFPYQGTS) is a signal peptide. Residues 21–214 (IILESGNVND…PIKKASQSNL (194 aa)) constitute a propeptide that is removed on maturation. 2 repeat units span residues 153 to 179 (KYED…YEPI) and 180 to 206 (KYED…YEPI). The Peptidase M12B domain maps to 220 to 416 (RYIELVIVAD…QKPQCILNKP (197 aa)). E223 and D307 together coordinate Ca(2+). A Zn(2+)-binding site is contributed by H356. Residue E357 is part of the active site. Residues H360 and H366 each contribute to the Zn(2+) site. Intrachain disulfides connect C371/C395 and C373/C378. 2 residues coordinate Ca(2+): C411 and N414. A propeptide spanning residues 417 to 432 (LRTDTVSTPVSGNELL) is cleaved from the precursor. The region spanning 424–505 (TPVSGNELLE…AGCPRNPFHA (82 aa)) is the Disintegrin domain. Intrachain disulfides connect C438/C453, C440/C448, C447/C470, C461/C467, C466/C491, and C479/C498. The short motif at 483–485 (RGD) is the Cell attachment site element.

It belongs to the venom metalloproteinase (M12B) family. P-II subfamily. P-IIa sub-subfamily. In terms of assembly, monomer. It depends on Zn(2+) as a cofactor. In terms of tissue distribution, expressed by the venom gland.

It localises to the secreted. Its function is as follows. Impairs hemostasis in the envenomed animal. Inhibits platelet aggregation induced by ADP, thrombin, platelet-activating factor and collagen. Acts by inhibiting fibrinogen interaction with platelet receptors GPIIb/GPIIIa (ITGA2B/ITGB3). In Gloydius brevicauda (Korean slamosa snake), this protein is Zinc metalloproteinase/disintegrin.